The following is a 764-amino-acid chain: 5-methyltetrahydropteroyltriglutamate--homocysteine methyltransferase (764 aa).

Residues 16–19 (RELK) and Lys-115 each bind 5-methyltetrahydropteroyltri-L-glutamate. L-homocysteine is bound by residues 435–437 (IGS) and Glu-488. Residues 435–437 (IGS) and Glu-488 each bind L-methionine. 5-methyltetrahydropteroyltri-L-glutamate contacts are provided by residues 519-520 (RC) and Trp-565. Asp-603 is an L-homocysteine binding site. Asp-603 provides a ligand contact to L-methionine. 5-methyltetrahydropteroyltri-L-glutamate is bound at residue Glu-609. Residues His-645, Cys-647, and Glu-669 each coordinate Zn(2+). Catalysis depends on His-698, which acts as the Proton donor. Cys-730 serves as a coordination point for Zn(2+).

It belongs to the vitamin-B12 independent methionine synthase family. Requires Zn(2+) as cofactor.

It carries out the reaction 5-methyltetrahydropteroyltri-L-glutamate + L-homocysteine = tetrahydropteroyltri-L-glutamate + L-methionine. The protein operates within amino-acid biosynthesis; L-methionine biosynthesis via de novo pathway; L-methionine from L-homocysteine (MetE route): step 1/1. Functionally, catalyzes the transfer of a methyl group from 5-methyltetrahydrofolate to homocysteine resulting in methionine formation. The chain is 5-methyltetrahydropteroyltriglutamate--homocysteine methyltransferase from Burkholderia thailandensis (strain ATCC 700388 / DSM 13276 / CCUG 48851 / CIP 106301 / E264).